Consider the following 397-residue polypeptide: CCA-adding enzyme (397 aa).

Positions 27 and 30 each coordinate ATP. CTP-binding residues include glycine 27 and arginine 30. Residues aspartate 40 and aspartate 42 each contribute to the Mg(2+) site. ATP-binding residues include arginine 111, aspartate 154, arginine 157, arginine 160, and arginine 163. Arginine 111, aspartate 154, arginine 157, arginine 160, and arginine 163 together coordinate CTP.

This sequence belongs to the tRNA nucleotidyltransferase/poly(A) polymerase family. Bacterial CCA-adding enzyme type 3 subfamily. In terms of assembly, homodimer. Requires Mg(2+) as cofactor.

It carries out the reaction a tRNA precursor + 2 CTP + ATP = a tRNA with a 3' CCA end + 3 diphosphate. It catalyses the reaction a tRNA with a 3' CCA end + 2 CTP + ATP = a tRNA with a 3' CCACCA end + 3 diphosphate. Functionally, catalyzes the addition and repair of the essential 3'-terminal CCA sequence in tRNAs without using a nucleic acid template. Adds these three nucleotides in the order of C, C, and A to the tRNA nucleotide-73, using CTP and ATP as substrates and producing inorganic pyrophosphate. tRNA 3'-terminal CCA addition is required both for tRNA processing and repair. Also involved in tRNA surveillance by mediating tandem CCA addition to generate a CCACCA at the 3' terminus of unstable tRNAs. While stable tRNAs receive only 3'-terminal CCA, unstable tRNAs are marked with CCACCA and rapidly degraded. The sequence is that of CCA-adding enzyme from Anoxybacillus flavithermus (strain DSM 21510 / WK1).